A 119-amino-acid polypeptide reads, in one-letter code: MARVKRGVEARRRHKKVLKAAKGYYGARSRVFRVAKQAVIKAGQYAYRDRRVKKRNFRALWITRINAQSRAEGLTYSQLIAGLKKASIVLDRRVLADLAVYDKAAFAAVVAKAKSALAA.

The protein belongs to the bacterial ribosomal protein bL20 family.

Functionally, binds directly to 23S ribosomal RNA and is necessary for the in vitro assembly process of the 50S ribosomal subunit. It is not involved in the protein synthesizing functions of that subunit. The protein is Large ribosomal subunit protein bL20 of Cellvibrio japonicus (strain Ueda107) (Pseudomonas fluorescens subsp. cellulosa).